A 131-amino-acid chain; its full sequence is Small ribosomal subunit protein bS16 (131 aa).

The disordered stretch occupies residues 87–131 (PGAEGTYRVPTANTKPPRIPGGGAAKAVEAPAEAPAEAETPASES). Positions 111 to 131 (AKAVEAPAEAPAEAETPASES) are enriched in low complexity.

Belongs to the bacterial ribosomal protein bS16 family.

This chain is Small ribosomal subunit protein bS16, found in Kineococcus radiotolerans (strain ATCC BAA-149 / DSM 14245 / SRS30216).